The chain runs to 447 residues: Methyl-coenzyme M reductase I subunit beta (447 aa).

Y371 is a coenzyme M binding site. G373 lines the coenzyme B pocket.

It belongs to the methyl-coenzyme M reductase beta subunit family. MCR is a hexamer of two alpha, two beta, and two gamma chains, forming a dimer of heterotrimers. Requires coenzyme F430 as cofactor.

Its subcellular location is the cytoplasm. The enzyme catalyses coenzyme B + methyl-coenzyme M = methane + coenzyme M-coenzyme B heterodisulfide. The protein operates within one-carbon metabolism; methyl-coenzyme M reduction; methane from methyl-coenzyme M: step 1/1. In terms of biological role, component of the methyl-coenzyme M reductase (MCR) I that catalyzes the reductive cleavage of methyl-coenzyme M (CoM-S-CH3 or 2-(methylthio)ethanesulfonate) using coenzyme B (CoB or 7-mercaptoheptanoylthreonine phosphate) as reductant which results in the production of methane and the mixed heterodisulfide of CoB and CoM (CoM-S-S-CoB). This is the final step in methanogenesis. In Methanocaldococcus jannaschii (strain ATCC 43067 / DSM 2661 / JAL-1 / JCM 10045 / NBRC 100440) (Methanococcus jannaschii), this protein is Methyl-coenzyme M reductase I subunit beta (mcrB).